The chain runs to 255 residues: Ciliogenesis and planar polarity effector 2 (255 aa).

Residues 52–255 (PADIASYKLF…VIAGLVGGAD (204 aa)) are small GTPase-like. GTP contacts are provided by residues 64-71 (GRSGAGKT) and 177-180 (TKLD).

Belongs to the small GTPase superfamily. Rab family.

It localises to the cytoplasm. Its subcellular location is the cytoskeleton. The protein resides in the cilium basal body. Potential effector of the planar cell polarity signaling pathway. Plays a role in targeted membrane trafficking most probably at the level of vesicle fusion with membranes. Involved in cilium biogenesis by regulating the transport of cargo proteins to the basal body and to the apical tips of cilia. More generally involved in exocytosis in secretory cells. The protein is Ciliogenesis and planar polarity effector 2 (cplane2) of Xenopus tropicalis (Western clawed frog).